The chain runs to 251 residues: Chlorocatechol 1,2-dioxygenase (251 aa).

Fe cation contacts are provided by Tyr130, Tyr164, His188, and His190.

The protein belongs to the intradiol ring-cleavage dioxygenase family. Requires Fe(3+) as cofactor.

It carries out the reaction 3-chlorocatechol + O2 = (2E,4Z)-2-chloromuconate + 2 H(+). It catalyses the reaction 3,4-dichlorocatechol + O2 = (2Z,4Z)-2,3-dichloromuconate + 2 H(+). The enzyme catalyses 3,5-dichlorocatechol + O2 = (2E,4E)-2,4-dichloromuconate + 2 H(+). The catalysed reaction is 3,6-dichlorocatechol + O2 = (2E,4E)-2,5-dichloromuconate + H(+). It carries out the reaction 3,4,6-trichlorocatechol + O2 = (2Z,4E)-2,3,5-trichloromuconate + H(+). Its pathway is xenobiotic degradation. Its function is as follows. Chlorocatechol 1,2-dioxygenase involved in the degradation of chlorinated benzenes, that occurs via chlorocatechol intermediates. Displays broad substrate specificity. Preferentially cleaves 3-chlorocatechol and 3,4-dichlorocatechol, and shows lower activity on 3,5-dichlorocatechol, 3,6-dichlorocatechol and 3,4,6-trichlorocatechol in vitro. Is not able to convert 3,4,5-trichlorocatechol and 3,4,5,6-tetrachlorocatechol. Thus, probably functions in the degradation pathways of 1,2-dichlorobenzene, 1,4-dichlorobenzene and 1,2,4-trichlorobenzene (via 3,4-dichlorocatechol, 3,6-dichlorocatechol and 3,4,6-trichlorocatechol intermediates, respectively), which allow Pseudomonas sp. strain P51 to grow on these substrates as the sole carbon and energy source. This is Chlorocatechol 1,2-dioxygenase from Pseudomonas sp. (strain P51).